Reading from the N-terminus, the 181-residue chain is Ribonuclease M5 (181 aa).

The 84-residue stretch at 5 to 88 folds into the Toprim domain; the sequence is KEIIVVEGKD…IKHAYLNTKD (84 aa). Mg(2+)-binding residues include Glu-11, Asp-57, and Asp-59.

Belongs to the ribonuclease M5 family. It depends on Mg(2+) as a cofactor.

The protein localises to the cytoplasm. The enzyme catalyses Endonucleolytic cleavage of RNA, removing 21 and 42 nucleotides, respectively, from the 5'- and 3'-termini of a 5S-rRNA precursor.. Functionally, required for correct processing of both the 5' and 3' ends of 5S rRNA precursor. Cleaves both sides of a double-stranded region yielding mature 5S rRNA in one step. This Borreliella burgdorferi (strain ATCC 35210 / DSM 4680 / CIP 102532 / B31) (Borrelia burgdorferi) protein is Ribonuclease M5.